The sequence spans 258 residues: Pyridoxine 5'-phosphate synthase (258 aa).

Position 16 (Asn16) interacts with 3-amino-2-oxopropyl phosphate. A 1-deoxy-D-xylulose 5-phosphate-binding site is contributed by 18-19; sequence DH. Residue Arg27 coordinates 3-amino-2-oxopropyl phosphate. His52 functions as the Proton acceptor in the catalytic mechanism. Positions 54 and 59 each coordinate 1-deoxy-D-xylulose 5-phosphate. The active-site Proton acceptor is Glu79. Position 109 (Thr109) interacts with 1-deoxy-D-xylulose 5-phosphate. Residue His200 is the Proton donor of the active site. Residues Gly201 and 222-223 each bind 3-amino-2-oxopropyl phosphate; that span reads GH.

The protein belongs to the PNP synthase family. Homooctamer; tetramer of dimers.

It is found in the cytoplasm. It catalyses the reaction 3-amino-2-oxopropyl phosphate + 1-deoxy-D-xylulose 5-phosphate = pyridoxine 5'-phosphate + phosphate + 2 H2O + H(+). It functions in the pathway cofactor biosynthesis; pyridoxine 5'-phosphate biosynthesis; pyridoxine 5'-phosphate from D-erythrose 4-phosphate: step 5/5. In terms of biological role, catalyzes the complicated ring closure reaction between the two acyclic compounds 1-deoxy-D-xylulose-5-phosphate (DXP) and 3-amino-2-oxopropyl phosphate (1-amino-acetone-3-phosphate or AAP) to form pyridoxine 5'-phosphate (PNP) and inorganic phosphate. The polypeptide is Pyridoxine 5'-phosphate synthase (Burkholderia lata (strain ATCC 17760 / DSM 23089 / LMG 22485 / NCIMB 9086 / R18194 / 383)).